The primary structure comprises 192 residues: MISISDTAQAHFRKLLKKQPDGTNIRVFVVNPGTQNAECGVSYCPPDAVDPEDQHLPFSGFDCLVDPLSAPYLVDATIDFVTDQMGSQLTLKAPNAKMRKVADDAPLIDRIEYVLMSEVNPMLAGHGGKVTLVELTEDKLAILQFGGGCNGCSMVDYTLKEGIEKQLLEKFPGELNGVKDATEHQRGDHSYY.

Residues Cys-149 and Cys-152 each contribute to the [4Fe-4S] cluster site.

The protein belongs to the NfuA family. In terms of assembly, homodimer. The cofactor is [4Fe-4S] cluster.

Involved in iron-sulfur cluster biogenesis. Binds a 4Fe-4S cluster, can transfer this cluster to apoproteins, and thereby intervenes in the maturation of Fe/S proteins. Could also act as a scaffold/chaperone for damaged Fe/S proteins. In Aeromonas salmonicida (strain A449), this protein is Fe/S biogenesis protein NfuA.